The following is a 530-amino-acid chain: Ubiquitin carboxyl-terminal hydrolase 17-like protein 18 (530 aa).

The USP domain maps to 80-375 (AGLQNMGNTC…QAYVLFYIQK (296 aa)). The active-site Nucleophile is C89. The Proton acceptor role is filled by H334. 2 stretches are compositionally biased toward basic and acidic residues: residues 382-392 (SESVSRGREPR) and 398-413 (DTDR…RDHP). Disordered regions lie at residues 382–414 (SESV…DHPC) and 509–530 (RGRA…LVCQ). The segment covering 510 to 524 (GRARRSKGKNKHSKR) has biased composition (basic residues).

This sequence belongs to the peptidase C19 family. USP17 subfamily.

The protein resides in the nucleus. It is found in the endoplasmic reticulum. It catalyses the reaction Thiol-dependent hydrolysis of ester, thioester, amide, peptide and isopeptide bonds formed by the C-terminal Gly of ubiquitin (a 76-residue protein attached to proteins as an intracellular targeting signal).. Functionally, deubiquitinating enzyme that removes conjugated ubiquitin from specific proteins to regulate different cellular processes that may include cell proliferation, progression through the cell cycle, apoptosis, cell migration, and the cellular response to viral infection. The chain is Ubiquitin carboxyl-terminal hydrolase 17-like protein 18 (USP17L18) from Homo sapiens (Human).